Reading from the N-terminus, the 339-residue chain is Protoheme IX farnesyltransferase (339 aa).

The segment at 1–27 is disordered; it reads MTVADPRLTDAPAHSRTSLLGRRRGGR. 9 consecutive transmembrane segments (helical) span residues 45–65, 67–87, 117–136, 140–159, 165–185, 191–211, 236–256, 257–277, and 309–329; these read IVELLLITTIPVMLFAAGGLP, GWLILTTFVGGALAAGCANTL, ALVFATVLGIASTAIFVAFV, SAALALGAILLYVVGYTLLL, QNIVWGGVAGCMQVLIGWTAV, WAPFVLFGVIFLWTPPHYWPL, VSRQIVLYTIAMVLCSLLLVP, LGGAGVVYGAAALVLGIGFLV, and PMGVFHGSITYLTLLSAAVAV.

It belongs to the UbiA prenyltransferase family. Protoheme IX farnesyltransferase subfamily.

It localises to the cell membrane. It catalyses the reaction heme b + (2E,6E)-farnesyl diphosphate + H2O = Fe(II)-heme o + diphosphate. The protein operates within porphyrin-containing compound metabolism; heme O biosynthesis; heme O from protoheme: step 1/1. In terms of biological role, converts heme B (protoheme IX) to heme O by substitution of the vinyl group on carbon 2 of heme B porphyrin ring with a hydroxyethyl farnesyl side group. The protein is Protoheme IX farnesyltransferase of Kineococcus radiotolerans (strain ATCC BAA-149 / DSM 14245 / SRS30216).